We begin with the raw amino-acid sequence, 301 residues long: DSC E3 ubiquitin ligase complex subunit B (301 aa).

3 helical membrane-spanning segments follow: residues 9–29 (APIT…LSIL), 52–72 (LATW…AAML), and 90–110 (TFII…LVLL). A compositionally biased stretch (low complexity) spans 268-284 (AAAAASGNAGSASEASG). A disordered region spans residues 268 to 301 (AAAAASGNAGSASEASGQRQRRREGGIMDRLRAL). Residues 290 to 301 (REGGIMDRLRAL) show a composition bias toward basic and acidic residues.

As to quaternary structure, component of the DSC E3 ubiquitin ligase complex composed of dscA, dscB, dscC and dscD.

The protein resides in the endoplasmic reticulum membrane. It catalyses the reaction S-ubiquitinyl-[E2 ubiquitin-conjugating enzyme]-L-cysteine + [acceptor protein]-L-lysine = [E2 ubiquitin-conjugating enzyme]-L-cysteine + N(6)-ubiquitinyl-[acceptor protein]-L-lysine.. It participates in protein modification; protein ubiquitination. Functionally, component of the DSC E3 ubiquitin ligase complex which is required for the srbA transcriptional activator proteolytic cleavage to release the soluble transcription factor from the membrane in low oxygen or sterol conditions. Required for growth during hypoxia and triazole drug susceptibility, as well as for virulence in a murine model of invasive pulmonary aspergillosis (IPA). The chain is DSC E3 ubiquitin ligase complex subunit B from Aspergillus fumigatus (strain ATCC MYA-4609 / CBS 101355 / FGSC A1100 / Af293) (Neosartorya fumigata).